We begin with the raw amino-acid sequence, 1529 residues long: DNA (cytosine-5)-methyltransferase 1B (1529 aa).

Disordered regions lie at residues 1-56 and 674-706; these read MVKS…RAAC and DDEL…TRSR. Residues 21–35 show a composition bias toward basic and acidic residues; the sequence is QKKDEDTTDKGKLDE. The span at 674–694 shows a compositional bias: acidic residues; that stretch reads DDELEENEDEDAEEEAQIEEE. The span at 697-706 shows a compositional bias: polar residues; sequence SKTPPSTRSR. BAH domains lie at 741-873 and 910-1049; these read LRIN…FSLP and ITYN…KQLP. The SAM-dependent MTase C5-type domain maps to 1093–1527; the sequence is LATLDIFAGC…RKLKEAVDAK (435 aa). C1198 is an active-site residue.

The protein belongs to the class I-like SAM-binding methyltransferase superfamily. C5-methyltransferase family. Expressed in roots and inflorescences. Expressed in roots, panicles, anthers, pistils, endosperm and imbibed embryos. Expressed in tissues containing actively replicating and dividing cells, such as shoot and root meristems.

The protein localises to the nucleus. The catalysed reaction is a 2'-deoxycytidine in DNA + S-adenosyl-L-methionine = a 5-methyl-2'-deoxycytidine in DNA + S-adenosyl-L-homocysteine + H(+). Its function is as follows. Major CG methylase that methylates chromatin CpG residues and maintains DNA methylation. Plays a major role in genomic imprinting, regulation of embryogenesis and seed viability. Maintains DNA methylation at the FIE1 gene locus in the embryo. The chain is DNA (cytosine-5)-methyltransferase 1B (MET1B) from Oryza sativa subsp. japonica (Rice).